Reading from the N-terminus, the 211-residue chain is Endonuclease YncB (211 aa).

The N-terminal stretch at 1–19 (MKKILISMIAIVLSITLAA) is a signal peptide. Cysteine 20 carries N-palmitoyl cysteine lipidation. Residue cysteine 20 is the site of S-diacylglycerol cysteine attachment. The interval 24–63 (HAAKNHSDSNGTEQVSQDTHSNEYNQTEQKAGTPHSKNQK) is disordered. A compositionally biased stretch (polar residues) spans 31–53 (DSNGTEQVSQDTHSNEYNQTEQK). The TNase-like domain occupies 64–197 (KLVNVTLDRA…KSDKLSIWSK (134 aa)). Aspartate 77 contributes to the Ca(2+) binding site. Arginine 91 is a catalytic residue. Ca(2+) is bound by residues aspartate 96 and threonine 97. Active-site residues include glutamate 99 and arginine 142.

This sequence belongs to the thermonuclease family. Ca(2+) is required as a cofactor.

Its subcellular location is the cell membrane. Its activity is regulated as follows. Inhibited by aurintricalboxylic acid but not by Zn(2+). Shows DNase activity on double strand DNA. In Bacillus subtilis (strain 168), this protein is Endonuclease YncB (yncB).